A 461-amino-acid chain; its full sequence is Phosphatidate cytidylyltransferase 1 (461 aa).

The segment at 1 to 67 (MLELRHRGSC…IPEIPPSSDR (67 aa)) is disordered. Arg-7 is modified (omega-N-methylarginine). Positions 20-56 (PHREGEAAGGDHETESTSDKETDIDDRYGDLDSRTDS) are enriched in basic and acidic residues. Phosphoserine is present on residues Ser-35 and Ser-37. The next 6 membrane-spanning stretches (helical) occupy residues 96 to 116 (MISL…LLVL), 149 to 169 (FLLC…FATF), 183 to 203 (HRFI…LSLV), 230 to 250 (LVIQ…SSVI), 279 to 299 (GFIG…YVLS), and 357 to 377 (IALS…ASGF).

The protein belongs to the CDS family. In terms of assembly, homodimer. Interacts with FOS; this interaction may enhance catalytic activity. Mg(2+) serves as cofactor. As to expression, expressed in adult tissues such as placenta, brain, small intestine, ovary, testis and prostate. Highly expressed in fetal kidney, lung and brain. Lower level in fetal liver.

It is found in the endoplasmic reticulum membrane. The enzyme catalyses a 1,2-diacyl-sn-glycero-3-phosphate + CTP + H(+) = a CDP-1,2-diacyl-sn-glycerol + diphosphate. It catalyses the reaction 1-octadecanoyl-2-(5Z,8Z,11Z,14Z-eicosatetraenoyl)-sn-glycero-3-phosphate + CTP + H(+) = 1-octadecanoyl-2-(5Z,8Z,11Z,14Z-eicosatetraenoyl)-sn-glycero-3-cytidine-5'-diphosphate + diphosphate. The catalysed reaction is 1-octadecanoyl-2-(9Z,12Z-octadecadienoyl)-sn-glycero-3-phosphate + CTP + H(+) = 1-octadecanoyl-2-(9Z,12Z-octadecadienoyl)-sn-glycero-3-cytidine-5'-diphosphate + diphosphate. It carries out the reaction 1-hexadecanoyl-2-(5Z,8Z,11Z,14Z-eicosatetraenoyl)-sn-glycero-3-phosphate + CTP + H(+) = 1-hexadecanoyl-2-(5Z,8Z,11Z,14Z-eicosatetraenoyl)-sn-glycero-3-cytidine-5'-diphosphate + diphosphate. The enzyme catalyses 1,2-di-(5Z,8Z,11Z,14Z)-eicosatetraenoyl-sn-glycero-3-phosphate + CTP + H(+) = 1,2-di-(5Z,8Z,11Z,14Z-eicosatetraenoyl)-sn-glycero-3-cytidine-5'-diphosphate + diphosphate. It catalyses the reaction 1-octadecanoyl-2-(9Z-octadecenoyl)-sn-glycero-3-phosphate + CTP + H(+) = 1-octadecanoyl-2-(9Z-octadecenoyl)-sn-glycero-3-cytidine-5'-diphosphate + diphosphate. The catalysed reaction is 1-octadecanoyl-2-(4Z,7Z,10Z,13Z,16Z,19Z-docosahexaenoyl)-sn-glycero-3-phosphate + CTP + H(+) = 1-octadecanoyl-2-(4Z,7Z,10Z,13Z,16Z,19Z-docosahexaenoyl)-sn-glycero-3-cytidine-5'-diphosphate + diphosphate. It carries out the reaction 1,2-di-(9Z,12Z-octadecadienoyl)-sn-glycero-3-phosphate + CTP + H(+) = 1,2-di-(9Z,12Z-octadecadienoyl)-sn-glycero-3-cytidine-5'-diphosphate + diphosphate. The enzyme catalyses 1,2-di-(9Z-octadecenoyl)-sn-glycero-3-phosphate + CTP + H(+) = 1,2-di-(9Z-octadecenoyl)-sn-glycero-3-cytidine-5'-diphosphate + diphosphate. It participates in phospholipid metabolism; CDP-diacylglycerol biosynthesis; CDP-diacylglycerol from sn-glycerol 3-phosphate: step 3/3. With respect to regulation, inhibited by its anionic phospholipid end products, with phosphatidylinositol-(4,5)- bisphosphate showing the strongest inhibition. In terms of biological role, catalyzes the conversion of phosphatidic acid (PA) to CDP-diacylglycerol (CDP-DAG), an essential intermediate in the synthesis of phosphatidylglycerol, cardiolipin and phosphatidylinositol. Exhibits almost no acyl chain preference for PA, showing no discrimination for the sn-1/sn-2 acyl chain composition of PAs. Plays an important role in regulating the growth of lipid droplets which are storage organelles at the center of lipid and energy homeostasis. Positively regulates the differentiation and development of adipocytes. The polypeptide is Phosphatidate cytidylyltransferase 1 (Homo sapiens (Human)).